The following is a 430-amino-acid chain: Tyrosine--tRNA ligase (430 aa).

Tyr-32 lines the L-tyrosine pocket. Residues 37–46 carry the 'HIGH' region motif; the sequence is PTADSLHIGH. L-tyrosine contacts are provided by Tyr-172 and Gln-176. Residues 232–236 carry the 'KMSKS' region motif; that stretch reads KFGKT. Lys-235 is a binding site for ATP. The 69-residue stretch at 362-430 folds into the S4 RNA-binding domain; it reads ISLVDLLADA…KKSYYLIIVE (69 aa).

Belongs to the class-I aminoacyl-tRNA synthetase family. TyrS type 1 subfamily. Homodimer.

Its subcellular location is the cytoplasm. The catalysed reaction is tRNA(Tyr) + L-tyrosine + ATP = L-tyrosyl-tRNA(Tyr) + AMP + diphosphate + H(+). Catalyzes the attachment of tyrosine to tRNA(Tyr) in a two-step reaction: tyrosine is first activated by ATP to form Tyr-AMP and then transferred to the acceptor end of tRNA(Tyr). In Porphyromonas gingivalis (strain ATCC 33277 / DSM 20709 / CIP 103683 / JCM 12257 / NCTC 11834 / 2561), this protein is Tyrosine--tRNA ligase.